We begin with the raw amino-acid sequence, 304 residues long: Ornithine carbamoyltransferase (304 aa).

Carbamoyl phosphate contacts are provided by residues 47-50 (STRT), Arg-98, and 125-128 (HPCQ). L-ornithine is bound by residues Asn-156, Asp-221, and 225–226 (SM). Carbamoyl phosphate contacts are provided by residues 262–263 (CL) and Arg-290.

Belongs to the aspartate/ornithine carbamoyltransferase superfamily. OTCase family.

The protein resides in the cytoplasm. It carries out the reaction carbamoyl phosphate + L-ornithine = L-citrulline + phosphate + H(+). It participates in amino-acid biosynthesis; L-arginine biosynthesis; L-arginine from L-ornithine and carbamoyl phosphate: step 1/3. Its function is as follows. Reversibly catalyzes the transfer of the carbamoyl group from carbamoyl phosphate (CP) to the N(epsilon) atom of ornithine (ORN) to produce L-citrulline. This is Ornithine carbamoyltransferase from Methanococcus maripaludis (strain C7 / ATCC BAA-1331).